The sequence spans 70 residues: MRSIISLILISAMVFSMIAPVPEEERLQLSEDERGGCLPHNRFCNALTGPRCCSRLRCKELSIWDSICLG.

Residues 1-20 (MRSIISLILISAMVFSMIAP) form the signal peptide. Residues 21-34 (VPEEERLQLSEDER) constitute a propeptide that is removed on maturation. 3 cysteine pairs are disulfide-bonded: C37/C53, C44/C58, and C52/C68. L69 carries the leucine amide modification.

Belongs to the neurotoxin 01 (U2-agtx) family. As to expression, expressed by the venom gland.

Its subcellular location is the secreted. Its function is as follows. Insect active toxin causing rapid but reversible paralysis in crickets. No activity shown in mammals. Does not show effect on mammalian voltage-gated calcium channels. The protein is U2-agatoxin-Ao1r of Agelena orientalis (Funnel-web spider).